Reading from the N-terminus, the 72-residue chain is MKLTCVVIVAVLLLTACQLLTADDSRGTQKHRALRSDTKLSMSTRCKGKGAPCRKTMYDCCSGSCGRRGKCG.

A signal peptide spans 1–22 (MKLTCVVIVAVLLLTACQLLTA). The propeptide occupies 23–45 (DDSRGTQKHRALRSDTKLSMSTR). Disulfide bonds link Cys46/Cys61, Cys53/Cys65, and Cys60/Cys71. Cys71 is modified (cysteine amide).

Belongs to the conotoxin O1 superfamily. As to expression, expressed by the venom duct.

It localises to the secreted. Omega-conotoxins act at presynaptic membranes, they bind and block voltage-gated calcium channels (Cav). This toxin blocks N-, P- and Q-type calcium channels. The sequence is that of Omega-conotoxin-like S6.6 from Conus striatus (Striated cone).